The chain runs to 365 residues: Glucose 1-dehydrogenase 1 (365 aa).

D38 lines the Zn(2+) pocket. T40 contributes to the substrate binding site. Residues H63 and E64 each coordinate Zn(2+). E115 and E151 together coordinate substrate. E151 contributes to the Zn(2+) binding site. NADP(+) contacts are provided by residues 182-185 (NGSL), 207-208 (RR), 272-274 (LGV), and 301-303 (SVN). Residue N303 participates in substrate binding.

The protein belongs to the zinc-containing alcohol dehydrogenase family. Glucose 1-dehydrogenase subfamily. Requires Zn(2+) as cofactor.

The catalysed reaction is D-glucose + NAD(+) = D-glucono-1,5-lactone + NADH + H(+). It carries out the reaction D-glucose + NADP(+) = D-glucono-1,5-lactone + NADPH + H(+). Its function is as follows. Catalyzes the NAD(P)(+)-dependent oxidation of D-glucose to D-gluconate via gluconolactone. Can utilize both NAD(+) and NADP(+) as electron acceptor. Is involved in the degradation of glucose through a modified Entner-Doudoroff pathway. This Haloterrigena turkmenica (strain ATCC 51198 / DSM 5511 / JCM 9101 / NCIMB 13204 / VKM B-1734 / 4k) (Halococcus turkmenicus) protein is Glucose 1-dehydrogenase 1.